The chain runs to 180 residues: MDKKNNLVWIDLEMTGLDPQHDEIIEIATIVTDAQLNILAEGPVIAVYQPEPILAQMDAWNQKHHGASGLIERVRQSSFNTLEAEAQTLSFLEQYSEKGRSPICGNSICQDRRFLSRLMPRLEAFFHYRNLDVSTIKELVARWYPEHYFHKNTTHQALQDIRDSIDELRHYRQRIFVNPS.

In terms of domain architecture, Exonuclease spans 7–168; sequence LVWIDLEMTG…QDIRDSIDEL (162 aa). Residue Y128 is part of the active site.

This sequence belongs to the oligoribonuclease family.

The protein localises to the cytoplasm. Its function is as follows. 3'-to-5' exoribonuclease specific for small oligoribonucleotides. This chain is Oligoribonuclease, found in Dichelobacter nodosus (strain VCS1703A).